We begin with the raw amino-acid sequence, 663 residues long: uncharacterized protein (663 aa).

The N-terminal stretch at 1–29 (MLDIGVIGRLKFATAFMAMSLLLVPAAEA) is a signal peptide.

It belongs to the bacterial solute-binding protein 5 family.

It localises to the periplasm. Possible binding-protein with either a transport or enzymatic activity. This is an uncharacterized protein from Sinorhizobium fredii (strain NBRC 101917 / NGR234).